A 31-amino-acid chain; its full sequence is Protein YmiC (31 aa).

Residues 9 to 29 (WSWMGAFSLSMLFWAELLWII) traverse the membrane as a helical segment.

The protein localises to the cell inner membrane. This Escherichia coli (strain K12) protein is Protein YmiC.